Consider the following 205-residue polypeptide: MKINTAEFIISNSIVSLCPQEHLPEYAFIGRSNVGKSSLINMLTNHKSLAKTSGRPGKTQLINHFKINNNWFLVDLPGYGYAKVSKKTKEVFQQFITDYFEKREQLVCAFVLIDIRHEAQKIDLEFITYLGEIELPFCIVFTKADKISKGKVAQHVAAYRTALLKNNWEEMPHHFVTSATEHTGKESLLSYIDEVNQDIFKQNGF.

One can recognise an EngB-type G domain in the interval His22–Asp198. Residues Gly30–Ser37, Gly57–Leu61, Asp75–Gly78, Thr142–Asp145, and Thr177–Ala179 each bind GTP. 2 residues coordinate Mg(2+): Ser37 and Thr59.

Belongs to the TRAFAC class TrmE-Era-EngA-EngB-Septin-like GTPase superfamily. EngB GTPase family. The cofactor is Mg(2+).

In terms of biological role, necessary for normal cell division and for the maintenance of normal septation. The sequence is that of Probable GTP-binding protein EngB from Flavobacterium psychrophilum (strain ATCC 49511 / DSM 21280 / CIP 103535 / JIP02/86).